Reading from the N-terminus, the 908-residue chain is MAAATAAAAAAAAAGEGMEPRALQYEQTLMYGRYTQELGAFAKEEAARIRLGGPEPWKGSPSARATPELLEYGQSRCARCRICSVRCHKFLVSRVGEDWIFLVLLGLLMALVSWAMDYAIAVCLQAQQWMSRGLNTNILLQYLAWVTYPVVLITFSAGFTQILAPQAVGSGIPEMKTILRGVVLKEYLTLKTFVAKVIGLTCALGSGMPLGKEGPFVHIASMCAALLSKFLSLFGGIYEHESRNTEMLAAACAVGVGCCFAAPIGGVLFSIEVTSTFFAVRNYWRGFFAATFSAFIFRVLAVWNRDEETITALFKTRFRLDFPFDLQELPAFAVIGIASGFGGALFVYLNRKIVQVMRKQKTINRFLMRKRLLFPALVTLLISTLTFPPGFGQFMAGQLSQKETLVTLFDNRTWVRQGLVEDLELPSTSQAWSPPRANVFLTLVIFILMKFWMSALATTIPVPCGAFMPVFVIGAAFGRLVGESMAAWFPDGIHTDSSTYRIVPGGYAVVGAAALAGAVTHTVSTAVIVFELTGQIAHILPVMIAVILANAVAQSLQPSLYDSIIRIKKLPYLPELGWGRHQQYRVRVEDIMVRDVPHVALSCTFRDLRLALHRTKGRMLALVESPESMILLGSIERSQVVALLGAQLSPARRRQHMQKLRKAQLSPPSDQESPPSSETSIRFQVNTEDSGFSGAHGQTHKPLKPALKRGPSNSTSLQEGTTGNMESAGIALRSLFCGSPPLEATSELEKSESCDKRKLKRVRISLASDSDPEAEMSPEEILEWEEQQLDEPVNFSDCKIDPAPFQLVERTSLHKTHTIFSLLGVDHAYVTSIGRLIGIVTLKELRKAIEGSVTAQGVKVRPPLASFRDSATSSSDTETTEVHALWGPRSRHGLPREGTPSDSDDKCQ.

Residues M1–V95 are Cytoplasmic-facing. Positions Q24–A42 are essential for channel gating by both voltage and cell volume. T28 is subject to Phosphothreonine. The tract at residues E44–W57 is modulates channel gating by both voltage and cell volume. 2 helical membrane passes run G96–W129 and I138–L163. The short motif at G169–P173 is the Selectivity filter part_1 element. S170 is a chloride binding site. The helical intramembrane region spans I172 to L179. Transmembrane regions (helical) follow at residues L188–S206 and E213–L231. A Selectivity filter part_2 motif is present at residues G211–P215. Intramembrane regions (helical) lie at residues M247–C259 and P263–I271. 5 helical membrane passes run Y283–W303, L329–M357, F366–L385, A437–A457, and G465–W488. The Selectivity filter part_3 motif lies at G465–P469. F467 contacts chloride. The segment at residues G505–V519 is an intramembrane region (helical). An intramembrane region (note=Loop between two helices) is located at residues T520–H521. An intramembrane region (helical) is located at residues T522 to T533. The note=Loop between two helices intramembrane region spans G534 to H538. A helical membrane pass occupies residues I539–L556. Residues Q557 to Q908 lie on the Cytoplasmic side of the membrane. Y561 is a chloride binding site. The region spanning M592–P650 is the CBS 1 domain. Basic residues predominate over residues R653 to K662. Residues R653–T722 form a disordered region. Low complexity predominate over residues S666 to S680. The span at I681–S690 shows a compositional bias: polar residues. Residues Q698 to L707 show a composition bias toward basic residues. Over residues P711–T722 the composition is skewed to polar residues. Phosphoserine is present on S768. One can recognise a CBS 2 domain in the interval I800–V860. A Basolateral membrane sorting motif is present at residues L822–L823. Positions S866–Q908 are disordered.

Belongs to the chloride channel (TC 2.A.49) family. ClC-2/CLCN2 subfamily. In terms of assembly, homodimer. Interacts with auxiliary subunit HEPACAM. Post-translationally, phosphorylated. Activated by dephosphorylation. Expressed in the adrenal gland and brain. Expressed in intestinal epithelium (at protein level). Expressed in salivary gland (at protein level).

It is found in the cell membrane. The protein localises to the myelin membrane. Its subcellular location is the basolateral cell membrane. It localises to the cell projection. The protein resides in the dendritic spine membrane. It is found in the axon. The enzyme catalyses chloride(in) = chloride(out). It catalyses the reaction thiocyanate(in) = thiocyanate(out). It carries out the reaction bromide(in) = bromide(out). The catalysed reaction is nitrate(in) = nitrate(out). The enzyme catalyses iodide(out) = iodide(in). Common gate kinetics are down-regulated by intracellular ATP. Inhibited by AK-42, a derivative of meclofenamate. Inhibited by Cd(2+). Inhibited by Zn(2+) and PKC activation. Inhibited at acidic pH. CCLN2:HEPACAM channel conductance is up-regulated upon hypo-osmolarity. Its function is as follows. Voltage-gated and osmosensitive chloride channel. Forms a homodimeric channel where each subunit has its own ion conduction pathway. Conducts double-barreled currents controlled by two types of gates, two fast glutamate gates that control each subunit independently and a slow common gate that opens and shuts off both subunits simultaneously. Displays inward rectification currents activated upon membrane hyperpolarization and extracellular hypotonicity. Contributes to chloride conductance involved in neuron excitability. In hippocampal neurons, generates a significant part of resting membrane conductance and provides an additional chloride efflux pathway to prevent chloride accumulation in dendrites upon GABA receptor activation. In glia, associates with the auxiliary subunit HEPACAM/GlialCAM at astrocytic processes and myelinated fiber tracts where it may regulate transcellular chloride flux buffering extracellular chloride and potassium concentrations. Regulates aldosterone production in adrenal glands. The opening of CLCN2 channels at hyperpolarized membrane potentials in the glomerulosa causes cell membrane depolarization, activation of voltage-gated calcium channels and increased expression of aldosterone synthase, the rate-limiting enzyme for aldosterone biosynthesis. Contributes to chloride conductance in retinal pigment epithelium involved in phagocytosis of shed photoreceptor outer segments and photoreceptor renewal. Conducts chloride currents at the basolateral membrane of epithelial cells with a role in chloride reabsorption rather than secretion. Permeable to small monovalent anions with chloride &gt; thiocyanate &gt; bromide &gt; nitrate &gt; iodide ion selectivity. The protein is Chloride channel protein 2 (Clcn2) of Mus musculus (Mouse).